Consider the following 519-residue polypeptide: Glucoamylase GLA1 (519 aa).

The first 27 residues, 1-27 (MRFGVLISVFVAIVSALPLQEGPLNKR), serve as a signal peptide directing secretion. Asn115 and Asn127 each carry an N-linked (GlcNAc...) asparagine glycan. Trp166 provides a ligand contact to substrate. Asn205 carries an N-linked (GlcNAc...) asparagine glycan. Residue Asp234 is the Proton acceptor of the active site. Glu237 functions as the Proton donor in the catalytic mechanism.

The protein belongs to the glycosyl hydrolase 15 family.

The enzyme catalyses Hydrolysis of terminal (1-&gt;4)-linked alpha-D-glucose residues successively from non-reducing ends of the chains with release of beta-D-glucose.. The sequence is that of Glucoamylase GLA1 (GLA1) from Saccharomycopsis fibuligera (Yeast).